Here is a 202-residue protein sequence, read N- to C-terminus: Protein DEHYDRATION-INDUCED 19 homolog 5 (202 aa).

Basic residues predominate over residues 88-97 (SHLLKRRKPS). The tract at residues 88–120 (SHLLKRRKPSRPSSSWPTPSNNSDPYFEGPPQY) is disordered. Positions 98–112 (RPSSSWPTPSNNSDP) are enriched in low complexity.

Belongs to the Di19 family.

The polypeptide is Protein DEHYDRATION-INDUCED 19 homolog 5 (DI19-5) (Oryza sativa subsp. japonica (Rice)).